Here is an 883-residue protein sequence, read N- to C-terminus: DNA mismatch repair protein MutS (883 aa).

Residue 619–626 (GPNMGGKS) participates in ATP binding.

Belongs to the DNA mismatch repair MutS family.

This protein is involved in the repair of mismatches in DNA. It is possible that it carries out the mismatch recognition step. This protein has a weak ATPase activity. This is DNA mismatch repair protein MutS from Marinomonas sp. (strain MWYL1).